The following is a 270-amino-acid chain: tRNA pseudouridine synthase A (270 aa).

Asp60 (nucleophile) is an active-site residue. Positions 107–111 are RNA binding; the sequence is FHARF. Tyr118 is a substrate binding site. The tract at residues 168-172 is interaction with tRNA; it reads QCQSR.

This sequence belongs to the tRNA pseudouridine synthase TruA family. In terms of assembly, homodimer.

It catalyses the reaction uridine(38/39/40) in tRNA = pseudouridine(38/39/40) in tRNA. In terms of biological role, formation of pseudouridine at positions 38, 39 and 40 in the anticodon stem and loop of transfer RNAs. This chain is tRNA pseudouridine synthase A, found in Escherichia coli (strain K12 / DH10B).